The sequence spans 452 residues: Cobyrinate a,c-diamide synthase (452 aa).

The GATase cobBQ-type domain occupies 248–441 (RVAYALDAAF…LHIHFYQNLA (194 aa)). The Nucleophile role is filled by Cys330.

This sequence belongs to the CobB/CbiA family. The cofactor is Mg(2+).

The catalysed reaction is cob(II)yrinate + 2 L-glutamine + 2 ATP + 2 H2O = cob(II)yrinate a,c diamide + 2 L-glutamate + 2 ADP + 2 phosphate + 2 H(+). Its pathway is cofactor biosynthesis; adenosylcobalamin biosynthesis; cob(II)yrinate a,c-diamide from sirohydrochlorin (anaerobic route): step 10/10. Its function is as follows. Catalyzes the ATP-dependent amidation of the two carboxylate groups at positions a and c of cobyrinate, using either L-glutamine or ammonia as the nitrogen source. This Listeria monocytogenes serovar 1/2a (strain ATCC BAA-679 / EGD-e) protein is Cobyrinate a,c-diamide synthase.